The following is a 247-amino-acid chain: MWVGIVSLFPEMFRSVTDFGVTGQAVKKGLLSVEAWNPRDFAHDKRRTVDDKPYGGGPGMLMMVQPLRDAIHAAKQASPGKTKVIYLSPQGRKLDQQGVEELAQNQNLILICGRYEGVDERIIESEVDEEWSIGDFVMTGGELPAMTLIDSVSRFIPGVLGDFASAEEDSFANGLLDCPHYTRPEVLDGKEVPAVLKSGNHEDIRRWRLKQSLGRTWLRRPELLENLALTDEQEQLLTEYIKETRHQ.

Residues Gly-113 and Ile-133–Met-138 each bind S-adenosyl-L-methionine.

Belongs to the RNA methyltransferase TrmD family. Homodimer.

The protein localises to the cytoplasm. The catalysed reaction is guanosine(37) in tRNA + S-adenosyl-L-methionine = N(1)-methylguanosine(37) in tRNA + S-adenosyl-L-homocysteine + H(+). Specifically methylates guanosine-37 in various tRNAs. The protein is tRNA (guanine-N(1)-)-methyltransferase of Vibrio cholerae serotype O1 (strain ATCC 39541 / Classical Ogawa 395 / O395).